The chain runs to 178 residues: Dual-action ribosomal maturation protein DarP (178 aa).

It belongs to the DarP family.

The protein resides in the cytoplasm. In terms of biological role, member of a network of 50S ribosomal subunit biogenesis factors which assembles along the 30S-50S interface, preventing incorrect 23S rRNA structures from forming. Promotes peptidyl transferase center (PTC) maturation. The sequence is that of Dual-action ribosomal maturation protein DarP from Haemophilus influenzae (strain PittEE).